We begin with the raw amino-acid sequence, 360 residues long: Peptide chain release factor 1 (360 aa).

Residue Gln-237 is modified to N5-methylglutamine.

It belongs to the prokaryotic/mitochondrial release factor family. Methylated by PrmC. Methylation increases the termination efficiency of RF1.

It is found in the cytoplasm. Functionally, peptide chain release factor 1 directs the termination of translation in response to the peptide chain termination codons UAG and UAA. This is Peptide chain release factor 1 from Pseudomonas savastanoi pv. phaseolicola (strain 1448A / Race 6) (Pseudomonas syringae pv. phaseolicola (strain 1448A / Race 6)).